The chain runs to 378 residues: Ret finger protein-like 2 (378 aa).

The RING-type; degenerate zinc finger occupies 101 to 143 (CPVCSDYLEKPMSLECGCAVCLKCINSLQKEPHGEDLLCCCSS). The B30.2/SPRY domain maps to 168–362 (EPKLKKILQM…DQGVLSICPL (195 aa)).

In terms of tissue distribution, seems to be expressed in prostate and less abundantly in adult brain, fetal liver, and fetal kidney.

The chain is Ret finger protein-like 2 (RFPL2) from Homo sapiens (Human).